The following is a 248-amino-acid chain: DNA repair protein RecO (248 aa).

This sequence belongs to the RecO family.

Functionally, involved in DNA repair and RecF pathway recombination. The sequence is that of DNA repair protein RecO from Bradyrhizobium sp. (strain ORS 278).